A 550-amino-acid polypeptide reads, in one-letter code: Membrane protein insertase YidC (550 aa).

Residues 6–26 (NLLVIALLFVSFMIWQTWEQD) traverse the membrane as a helical segment. Disordered regions lie at residues 28 to 54 (APKP…GVPA) and 111 to 132 (QSGL…RPLY). Over residues 30–52 (KPQVQQTTQTTTTAAGSAASQGV) the composition is skewed to low complexity. Polar residues predominate over residues 111 to 127 (QSGLTGRNGPDNPNNNK). A run of 4 helical transmembrane segments spans residues 346–366 (KWIH…TFIV), 421–441 (LGGC…YYML), 459–479 (LSAQ…MFFI), and 500–520 (PVIF…YYIV).

It belongs to the OXA1/ALB3/YidC family. Type 1 subfamily. In terms of assembly, interacts with the Sec translocase complex via SecD. Specifically interacts with transmembrane segments of nascent integral membrane proteins during membrane integration.

Its subcellular location is the cell inner membrane. In terms of biological role, required for the insertion and/or proper folding and/or complex formation of integral membrane proteins into the membrane. Involved in integration of membrane proteins that insert both dependently and independently of the Sec translocase complex, as well as at least some lipoproteins. Aids folding of multispanning membrane proteins. The sequence is that of Membrane protein insertase YidC from Cronobacter sakazakii (strain ATCC BAA-894) (Enterobacter sakazakii).